The following is a 498-amino-acid chain: NAD(P)H-quinone oxidoreductase subunit 2, chloroplastic (498 aa).

14 helical membrane passes run 18 to 38 (LTIL…VIDL), 51 to 71 (ISMV…GFFT), 87 to 107 (FFLL…ILCS), 111 to 131 (LAEF…LSCA), 134 to 154 (LVTI…LSGY), 168 to 188 (FLLM…LLYG), 211 to 231 (IIYL…SLFP), 244 to 264 (PTPV…ALFT), 278 to 298 (WHVA…LIAV), 306 to 326 (MLAF…LSAD), 337 to 357 (YTFI…LFGL), 379 to 399 (FSLV…GFFG), 411 to 431 (GLYS…YYYL), and 470 to 490 (IAMI…DPII).

The protein belongs to the complex I subunit 2 family. NDH is composed of at least 16 different subunits, 5 of which are encoded in the nucleus.

Its subcellular location is the plastid. The protein localises to the chloroplast thylakoid membrane. It catalyses the reaction a plastoquinone + NADH + (n+1) H(+)(in) = a plastoquinol + NAD(+) + n H(+)(out). The catalysed reaction is a plastoquinone + NADPH + (n+1) H(+)(in) = a plastoquinol + NADP(+) + n H(+)(out). In terms of biological role, NDH shuttles electrons from NAD(P)H:plastoquinone, via FMN and iron-sulfur (Fe-S) centers, to quinones in the photosynthetic chain and possibly in a chloroplast respiratory chain. The immediate electron acceptor for the enzyme in this species is believed to be plastoquinone. Couples the redox reaction to proton translocation, and thus conserves the redox energy in a proton gradient. This chain is NAD(P)H-quinone oxidoreductase subunit 2, chloroplastic, found in Adiantum capillus-veneris (Maidenhair fern).